Reading from the N-terminus, the 667-residue chain is Fatty acyl-CoA synthetase A (667 aa).

The protein belongs to the ATP-dependent AMP-binding enzyme family.

The protein localises to the endosome membrane. It catalyses the reaction a long-chain fatty acid + ATP + CoA = a long-chain fatty acyl-CoA + AMP + diphosphate. Long chain fatty acid acyl-CoA synthetases catalyze the formation of a thiester bond between a free fatty acid and coenzyme A during fatty acid metabolic process. May mediate fatty acid retrieval from the lumen of endosomes into the cytoplasm. This Dictyostelium discoideum (Social amoeba) protein is Fatty acyl-CoA synthetase A (fcsA).